The primary structure comprises 238 residues: Endonuclease III homolog (238 aa).

Residues 129–155 enclose the HhH domain; that stretch reads REKGLPREMKDLISLPGIGNKMALLYM. The Nucleophile; for N-glycosylase activity role is filled by lysine 149. The [4Fe-4S] cluster site is built by cysteine 217, cysteine 224, cysteine 227, and cysteine 233.

Belongs to the Nth/MutY family. The cofactor is [4Fe-4S] cluster.

It is found in the nucleus. Its subcellular location is the mitochondrion. The enzyme catalyses 2'-deoxyribonucleotide-(2'-deoxyribose 5'-phosphate)-2'-deoxyribonucleotide-DNA = a 3'-end 2'-deoxyribonucleotide-(2,3-dehydro-2,3-deoxyribose 5'-phosphate)-DNA + a 5'-end 5'-phospho-2'-deoxyribonucleoside-DNA + H(+). In terms of biological role, bifunctional DNA N-glycosylase with associated apurinic/apyrimidinic (AP) lyase function that catalyzes the first step in base excision repair (BER), the primary repair pathway for the repair of oxidative DNA damage. The DNA N-glycosylase activity releases the damaged DNA base from DNA by cleaving the N-glycosidic bond, leaving an AP site. The AP lyase activity cleaves the phosphodiester bond 3' to the AP site by a beta-elimination. Primarily recognizes and repairs oxidative base damage of pyrimidines. This Encephalitozoon cuniculi (strain GB-M1) (Microsporidian parasite) protein is Endonuclease III homolog.